The chain runs to 370 residues: CCA-adding enzyme (370 aa).

Residues glycine 8 and arginine 11 each contribute to the ATP site. CTP contacts are provided by glycine 8 and arginine 11. Mg(2+) contacts are provided by aspartate 21 and aspartate 23. 3 residues coordinate ATP: arginine 91, arginine 137, and arginine 140. CTP-binding residues include arginine 91, arginine 137, and arginine 140.

The protein belongs to the tRNA nucleotidyltransferase/poly(A) polymerase family. Bacterial CCA-adding enzyme type 2 subfamily. Requires Mg(2+) as cofactor.

The enzyme catalyses a tRNA precursor + 2 CTP + ATP = a tRNA with a 3' CCA end + 3 diphosphate. It carries out the reaction a tRNA with a 3' CCA end + 2 CTP + ATP = a tRNA with a 3' CCACCA end + 3 diphosphate. In terms of biological role, catalyzes the addition and repair of the essential 3'-terminal CCA sequence in tRNAs without using a nucleic acid template. Adds these three nucleotides in the order of C, C, and A to the tRNA nucleotide-73, using CTP and ATP as substrates and producing inorganic pyrophosphate. tRNA 3'-terminal CCA addition is required both for tRNA processing and repair. Also involved in tRNA surveillance by mediating tandem CCA addition to generate a CCACCA at the 3' terminus of unstable tRNAs. While stable tRNAs receive only 3'-terminal CCA, unstable tRNAs are marked with CCACCA and rapidly degraded. This chain is CCA-adding enzyme, found in Pseudomonas putida (strain W619).